Reading from the N-terminus, the 316-residue chain is Ribosomal RNA small subunit methyltransferase H (316 aa).

S-adenosyl-L-methionine contacts are provided by residues 32-34, D52, F79, D100, and Q107; that span reads AGH.

The protein belongs to the methyltransferase superfamily. RsmH family.

The protein resides in the cytoplasm. It catalyses the reaction cytidine(1402) in 16S rRNA + S-adenosyl-L-methionine = N(4)-methylcytidine(1402) in 16S rRNA + S-adenosyl-L-homocysteine + H(+). In terms of biological role, specifically methylates the N4 position of cytidine in position 1402 (C1402) of 16S rRNA. The chain is Ribosomal RNA small subunit methyltransferase H from Lysinibacillus sphaericus (strain C3-41).